Reading from the N-terminus, the 262-residue chain is Ribosomal RNA small subunit methyltransferase G (262 aa).

S-adenosyl-L-methionine is bound by residues glycine 72, leucine 77, and arginine 142. Positions 212–262 are disordered; that stretch reads RSSQLSRAEGRKGRGDGERHDGRQVRRTARDSRRSREVDRDQPTRGQSRST. Basic and acidic residues predominate over residues 219–254; the sequence is AEGRKGRGDGERHDGRQVRRTARDSRRSREVDRDQP.

The protein belongs to the methyltransferase superfamily. RNA methyltransferase RsmG family.

The protein resides in the cytoplasm. Its function is as follows. Specifically methylates the N7 position of guanine in position 518 of 16S rRNA. This is Ribosomal RNA small subunit methyltransferase G from Frankia alni (strain DSM 45986 / CECT 9034 / ACN14a).